We begin with the raw amino-acid sequence, 221 residues long: Glutathione peroxidase 6 (221 aa).

The first 19 residues, 1–19, serve as a signal peptide directing secretion; the sequence is MAQKLWGSCLFSLFMAALA. Cys73 is an active-site residue.

Belongs to the glutathione peroxidase family.

Its subcellular location is the secreted. The catalysed reaction is 2 glutathione + H2O2 = glutathione disulfide + 2 H2O. This is Glutathione peroxidase 6 (Gpx6) from Mus musculus (Mouse).